The sequence spans 100 residues: ESAT-6-like protein EsxT (100 aa).

Belongs to the WXG100 family. ESAT-6 subfamily. In terms of assembly, forms a tight 1:1 complex with EsxU.

Its subcellular location is the secreted. In Mycobacterium tuberculosis (strain CDC 1551 / Oshkosh), this protein is ESAT-6-like protein EsxT.